Consider the following 576-residue polypeptide: Arginine--tRNA ligase (576 aa).

The 'HIGH' region motif lies at 126 to 136 (ANPTGPMHIGH).

This sequence belongs to the class-I aminoacyl-tRNA synthetase family. As to quaternary structure, monomer.

The protein localises to the cytoplasm. The enzyme catalyses tRNA(Arg) + L-arginine + ATP = L-arginyl-tRNA(Arg) + AMP + diphosphate. This is Arginine--tRNA ligase from Rickettsia rickettsii (strain Iowa).